We begin with the raw amino-acid sequence, 313 residues long: Porphobilinogen deaminase (313 aa).

At C242 the chain carries S-(dipyrrolylmethanemethyl)cysteine.

It belongs to the HMBS family. Monomer. The cofactor is dipyrromethane.

The enzyme catalyses 4 porphobilinogen + H2O = hydroxymethylbilane + 4 NH4(+). The protein operates within porphyrin-containing compound metabolism; protoporphyrin-IX biosynthesis; coproporphyrinogen-III from 5-aminolevulinate: step 2/4. Tetrapolymerization of the monopyrrole PBG into the hydroxymethylbilane pre-uroporphyrinogen in several discrete steps. This is Porphobilinogen deaminase from Pseudomonas putida (strain ATCC 47054 / DSM 6125 / CFBP 8728 / NCIMB 11950 / KT2440).